A 772-amino-acid chain; its full sequence is A type blood N-acetyl-alpha-D-galactosamine deacetylase (772 aa).

Positions 1 to 27 are cleaved as a signal peptide; the sequence is MRNRRKAVSLLTGLLVTAQLFPTAALA. Substrate is bound by residues Ser87 and His123. Position 126 (Asp126) interacts with a divalent metal cation. The segment at 180–402 is deacetylase activity; it reads WSKPTSDAER…WRIGYAENSF (223 aa). Residue Tyr236 coordinates substrate. His278 serves as a coordination point for a divalent metal cation. One can recognise an F5/8 type C domain in the interval 494 to 605; the sequence is SDDLEIAVVE…KDLVASGSDW (112 aa). Residues 502 to 765 form a CBM32 carbohydrate-binding domain region; it reads VENPYTLIPQ…VCVSPVVDFD (264 aa). The interval 515 to 772 is not required for activity on soluble substrates; the sequence is TATATSVYGG…DFDYFSYVGE (258 aa).

Requires a divalent metal cation as cofactor.

The enzyme catalyses an N-acetyl-alpha-D-galactosaminyl-(1-&gt;3)-[alpha-L-fucosyl-(1-&gt;2)]-beta-D-galactosyl derivative + H2O = an alpha-D-galactosaminyl-(1-&gt;3)-[alpha-L-fucosyl-(1-&gt;2)]-beta-D-galactosyl derivative + acetate. Its activity is regulated as follows. Inhibited by EDTA. In terms of biological role, one of an enzyme pair that work together to convert the A antigen to the H antigen of the O blood type, which together release galactosamine. Catalyzes the first step in the conversion, generating the substrate for the subsequent enzyme (FpGalNase, AC P0DTR5). Works on many different A antigen subtypes. Glu-90 probably activates a nucleophilic water molecule to start the deacetylation reaction. This is A type blood N-acetyl-alpha-D-galactosamine deacetylase from Flavonifractor plautii (Fusobacterium plautii).